Reading from the N-terminus, the 296-residue chain is Bifunctional protein FolD (296 aa).

NADP(+) contacts are provided by residues 170–172 and S195; that span reads GRS.

This sequence belongs to the tetrahydrofolate dehydrogenase/cyclohydrolase family. Homodimer.

It carries out the reaction (6R)-5,10-methylene-5,6,7,8-tetrahydrofolate + NADP(+) = (6R)-5,10-methenyltetrahydrofolate + NADPH. It catalyses the reaction (6R)-5,10-methenyltetrahydrofolate + H2O = (6R)-10-formyltetrahydrofolate + H(+). It functions in the pathway one-carbon metabolism; tetrahydrofolate interconversion. Its function is as follows. Catalyzes the oxidation of 5,10-methylenetetrahydrofolate to 5,10-methenyltetrahydrofolate and then the hydrolysis of 5,10-methenyltetrahydrofolate to 10-formyltetrahydrofolate. This Rhodospirillum rubrum (strain ATCC 11170 / ATH 1.1.1 / DSM 467 / LMG 4362 / NCIMB 8255 / S1) protein is Bifunctional protein FolD.